The primary structure comprises 555 residues: Potassium-transporting ATPase potassium-binding subunit (555 aa).

The next 10 helical transmembrane spans lie at I2–I22, Q60–F80, I130–F150, V173–T193, M246–Y266, I278–E298, A374–V394, L412–L432, L483–L503, and G525–L545.

It belongs to the KdpA family. In terms of assembly, the system is composed of three essential subunits: KdpA, KdpB and KdpC.

It is found in the cell membrane. Functionally, part of the high-affinity ATP-driven potassium transport (or Kdp) system, which catalyzes the hydrolysis of ATP coupled with the electrogenic transport of potassium into the cytoplasm. This subunit binds the extracellular potassium ions and delivers the ions to the membrane domain of KdpB through an intramembrane tunnel. The polypeptide is Potassium-transporting ATPase potassium-binding subunit (Bacillus anthracis (strain A0248)).